The following is a 228-amino-acid chain: MSATKTLEAVARDRVGKGAARAVRRQGQIPAVIYGGNQAPEAIAVDLIRTRTLIYAGGFKTTLFDITVGGKKTRAIPRDYQLDPVSGVPLHVDFLRVVSGQTVTVDVPVHFVNDEKAPGIKQKGGTLNVALHTVSLDVAPDQIPDAIEVDLTGREIGDVIHASDLRLPAGTYTGEPTDTVANILPPTVLGAEVEAEEAAIAEAQSAEAAEEKAEAEAEATNEKNDTEE.

A disordered region spans residues 198 to 228 (AAIAEAQSAEAAEEKAEAEAEATNEKNDTEE). Basic and acidic residues predominate over residues 209–228 (AEEKAEAEAEATNEKNDTEE).

This sequence belongs to the bacterial ribosomal protein bL25 family. CTC subfamily. In terms of assembly, part of the 50S ribosomal subunit; part of the 5S rRNA/L5/L18/L25 subcomplex. Contacts the 5S rRNA. Binds to the 5S rRNA independently of L5 and L18.

Its function is as follows. This is one of the proteins that binds to the 5S RNA in the ribosome where it forms part of the central protuberance. The sequence is that of Large ribosomal subunit protein bL25 from Methylorubrum populi (strain ATCC BAA-705 / NCIMB 13946 / BJ001) (Methylobacterium populi).